A 306-amino-acid polypeptide reads, in one-letter code: Pantothenate kinase (306 aa).

91–98 (GSVAVGKS) contacts ATP.

This sequence belongs to the prokaryotic pantothenate kinase family.

It is found in the cytoplasm. The catalysed reaction is (R)-pantothenate + ATP = (R)-4'-phosphopantothenate + ADP + H(+). It participates in cofactor biosynthesis; coenzyme A biosynthesis; CoA from (R)-pantothenate: step 1/5. This Streptococcus mutans serotype c (strain ATCC 700610 / UA159) protein is Pantothenate kinase.